A 263-amino-acid chain; its full sequence is UPF0739 protein C1orf74 homolog (263 aa).

Belongs to the UPF0739 family.

This Xenopus tropicalis (Western clawed frog) protein is UPF0739 protein C1orf74 homolog.